Reading from the N-terminus, the 80-residue chain is UPF0512 protein Q (80 aa).

It belongs to the UPF0512 family.

The sequence is that of UPF0512 protein Q from Dictyostelium discoideum (Social amoeba).